The sequence spans 447 residues: Phosphoglucosamine mutase (447 aa).

The Phosphoserine intermediate role is filled by Ser-106. Mg(2+) is bound by residues Ser-106, Asp-245, Asp-247, and Asp-249. Ser-106 carries the phosphoserine modification.

The protein belongs to the phosphohexose mutase family. Requires Mg(2+) as cofactor. Post-translationally, activated by phosphorylation.

The catalysed reaction is alpha-D-glucosamine 1-phosphate = D-glucosamine 6-phosphate. Catalyzes the conversion of glucosamine-6-phosphate to glucosamine-1-phosphate. The protein is Phosphoglucosamine mutase of Cupriavidus taiwanensis (strain DSM 17343 / BCRC 17206 / CCUG 44338 / CIP 107171 / LMG 19424 / R1) (Ralstonia taiwanensis (strain LMG 19424)).